Here is a 100-residue protein sequence, read N- to C-terminus: Urease subunit gamma (100 aa).

This sequence belongs to the urease gamma subunit family. As to quaternary structure, heterotrimer of UreA (gamma), UreB (beta) and UreC (alpha) subunits. Three heterotrimers associate to form the active enzyme.

Its subcellular location is the cytoplasm. It catalyses the reaction urea + 2 H2O + H(+) = hydrogencarbonate + 2 NH4(+). It functions in the pathway nitrogen metabolism; urea degradation; CO(2) and NH(3) from urea (urease route): step 1/1. In Acinetobacter baylyi (strain ATCC 33305 / BD413 / ADP1), this protein is Urease subunit gamma.